A 1214-amino-acid polypeptide reads, in one-letter code: [F-actin]-monooxygenase mical1 (1214 aa).

Positions methionine 1–glutamate 488 are monooxygenase domain. FAD contacts are provided by residues cysteine 96, glutamate 115–arginine 117, arginine 122–asparagine 124, phenylalanine 182, tyrosine 292, and aspartate 392. The segment at alanine 484 to lysine 505 is disordered. The Calponin-homology (CH) domain maps to methionine 508–threonine 614. Positions histidine 649–glutamate 676 are disordered. Residues asparagine 663 to glutamate 676 are compositionally biased toward basic and acidic residues. Positions glutamate 686–glutamate 748 constitute an LIM zinc-binding domain. Zn(2+)-binding residues include cysteine 688, cysteine 691, histidine 709, cysteine 712, cysteine 715, cysteine 718, cysteine 738, and histidine 741. The interval glutamate 747–leucine 1019 is disordered. The segment covering proline 796–leucine 815 has biased composition (acidic residues). Residues serine 828–isoleucine 841 are compositionally biased toward polar residues. Positions arginine 910–serine 922 are enriched in low complexity. The segment covering serine 974–phenylalanine 987 has biased composition (polar residues). Residues valine 1003–leucine 1019 show a composition bias toward acidic residues. Positions lysine 1053–leucine 1199 constitute a bMERB domain. Positions histidine 1061 to glutamate 1131 form a coiled coil. The interval glutamine 1194–glutamate 1214 is disordered.

It belongs to the Mical family. It depends on FAD as a cofactor.

Its subcellular location is the cytoplasm. It localises to the cytoskeleton. It is found in the midbody. The protein localises to the endosome membrane. The catalysed reaction is L-methionyl-[F-actin] + NADPH + O2 + H(+) = L-methionyl-(R)-S-oxide-[F-actin] + NADP(+) + H2O. The enzyme catalyses NADPH + O2 + H(+) = H2O2 + NADP(+). In terms of biological role, monooxygenase that promotes depolymerization of F-actin by mediating oxidation of specific methionine residues on actin to form methionine-sulfoxide, resulting in actin filament disassembly and prevent repolymerization. May be involved in endosomal tubule extension and neosynthesized protein export. The polypeptide is [F-actin]-monooxygenase mical1 (mical1) (Danio rerio (Zebrafish)).